Here is a 252-residue protein sequence, read N- to C-terminus: Ubiquinone biosynthesis O-methyltransferase (252 aa).

Residues Arg41, Gly72, Asp93, and Met136 each contribute to the S-adenosyl-L-methionine site.

The protein belongs to the methyltransferase superfamily. UbiG/COQ3 family.

It carries out the reaction a 3-demethylubiquinol + S-adenosyl-L-methionine = a ubiquinol + S-adenosyl-L-homocysteine + H(+). The enzyme catalyses a 3-(all-trans-polyprenyl)benzene-1,2-diol + S-adenosyl-L-methionine = a 2-methoxy-6-(all-trans-polyprenyl)phenol + S-adenosyl-L-homocysteine + H(+). It functions in the pathway cofactor biosynthesis; ubiquinone biosynthesis. Functionally, O-methyltransferase that catalyzes the 2 O-methylation steps in the ubiquinone biosynthetic pathway. The polypeptide is Ubiquinone biosynthesis O-methyltransferase (Rhizobium leguminosarum bv. trifolii (strain WSM2304)).